The sequence spans 864 residues: Leukocyte tyrosine kinase receptor (864 aa).

Positions 1–16 (MGCWGQLLVWFGAAGA) are cleaved as a signal peptide. At 17 to 424 (ILCSSPGSQE…CMDLHKPPGP (408 aa)) the chain is on the extracellular side. A compositionally biased stretch (low complexity) spans 30–40 (RSSPLPLASPS). The segment at 30–64 (RSSPLPLASPSPRDPKVSAPPSILEPASPLNSPGT) is disordered. 2 cysteine pairs are disulfide-bonded: C73-C86 and C168-C179. Residues 239–297 (YLRPRDRGRTQASPEKLENRSEAPGSGGRGGAAGGGGGWTSRAPSPQAGRSLQEGAEGG) form a disordered region. The segment covering 241–259 (RPRDRGRTQASPEKLENRS) has biased composition (basic and acidic residues). Residue N257 is glycosylated (N-linked (GlcNAc...) asparagine). Residues 263–277 (GSGGRGGAAGGGGGW) show a composition bias toward gly residues. A disulfide bridge links C300 with C322. Residues N380 and N412 are each glycosylated (N-linked (GlcNAc...) asparagine). The chain crosses the membrane as a helical span at residues 425–449 (LVLMVAVVATSTLSLLMVCGVLILV). The Cytoplasmic segment spans residues 450 to 864 (KQKKWQGLQE…QNLWNPTYRS (415 aa)). The region spanning 510–786 (VTLLRALGHG…LQYCTQDPDV (277 aa)) is the Protein kinase domain. ATP-binding positions include 516-524 (LGHGAFGEV) and K544. D643 serves as the catalytic Proton acceptor. The residue at position 676 (Y676) is a Phosphotyrosine; by autocatalysis. 2 disordered regions span residues 790–830 (LLPM…KLKS) and 842–864 (SGLK…TYRS). Residues 852-864 (LQPQNLWNPTYRS) are compositionally biased toward polar residues.

Belongs to the protein kinase superfamily. Tyr protein kinase family. Insulin receptor subfamily. As to quaternary structure, homodimer; homodimerizes following ligand-binding. Part of a complex including LTK, TNK2 and GRB2, in which GRB2 promotes LTK recruitment by TNK2. Phosphorylated at tyrosine residues by autocatalysis, which activates kinase activity. In terms of tissue distribution, expressed in non-hematopoietic cell lines and T- and B-cell lines.

It is found in the cell membrane. The enzyme catalyses L-tyrosyl-[protein] + ATP = O-phospho-L-tyrosyl-[protein] + ADP + H(+). With respect to regulation, activated by ligand-binding, leading to homodimerization and autophosphorylation. In terms of biological role, receptor with a tyrosine-protein kinase activity. Following activation by ALKAL1 or ALKAL2 ligands at the cell surface, transduces an extracellular signal into an intracellular response. Ligand-binding to the extracellular domain induces tyrosine kinase activation, leading to activation of the mitogen-activated protein kinase (MAPK) pathway. Phosphorylates almost exclusively at the first tyrosine of the Y-x-x-x-Y-Y motif. The exact function of this protein is not known; studies with chimeric proteins demonstrate its ability to promote growth and specifically neurite outgrowth, and cell survival. Involved in regulation of the secretory pathway involving endoplasmic reticulum (ER) export sites (ERESs) and ER to Golgi transport. The protein is Leukocyte tyrosine kinase receptor of Homo sapiens (Human).